Here is a 435-residue protein sequence, read N- to C-terminus: Gap junction alpha-3 protein (435 aa).

Residues 2–15 (GDWSFLGRLLENAQ) lie within the membrane without spanning it. Topologically, residues 16–19 (EHST) are cytoplasmic. A helical membrane pass occupies residues 20-40 (VIGKVWLTVLFIFRILVLGAA). Residues 41–71 (AEDVWGDEQSDFTCNTQQPGCENVCYDRAFP) lie on the Extracellular side of the membrane. Cystine bridges form between cysteine 54-cysteine 192, cysteine 61-cysteine 186, and cysteine 65-cysteine 181. A helical membrane pass occupies residues 72–92 (ISHIRFWALQIIFVSTPTLIY). Over 93-152 (LGHVLHIVRMEEKKKEREEEEQLKRESPSPKEPPQDNPSSRDDRGRVRMAGALLRTYVFN) the chain is Cytoplasmic. Positions 108 to 121 (EREEEEQLKRESPS) are enriched in basic and acidic residues. Residues 108–136 (EREEEEQLKRESPSPKEPPQDNPSSRDDR) form a disordered region. The chain crosses the membrane as a helical span at residues 153-173 (IIFKTLFEVGFIAGQYFLYGF). Residues 174–201 (ELKPLYRCDRWPCPNTVDCFISRPTEKT) lie on the Extracellular side of the membrane. A helical transmembrane segment spans residues 202–222 (IFIIFMLAVACASLLLNMLEI). Topologically, residues 223–435 (YHLGWKKLKQ…GRARPEDLAI (213 aa)) are cytoplasmic. Positions 332-435 (AAERQPPALK…GRARPEDLAI (104 aa)) are disordered. Composition is skewed to low complexity over residues 342-389 (AYPA…ALAG) and 415-427 (GRAS…SSGR).

Belongs to the connexin family. Alpha-type (group II) subfamily. As to quaternary structure, a hemichannel or connexon is composed of a hexamer of connexins. A functional gap junction is formed by the apposition of two hemichannels. Forms heteromeric channels with GJA8.

Its subcellular location is the cell membrane. The protein localises to the cell junction. It localises to the gap junction. Structural component of lens fiber gap junctions. Gap junctions are dodecameric channels that connect the cytoplasm of adjoining cells. They are formed by the docking of two hexameric hemichannels, one from each cell membrane. Small molecules and ions diffuse from one cell to a neighboring cell via the central pore. This is Gap junction alpha-3 protein (GJA3) from Homo sapiens (Human).